The sequence spans 84 residues: Anaphase-promoting complex subunit 11 (84 aa).

Zn(2+) is bound by residues cysteine 23, cysteine 26, cysteine 34, cysteine 37, cysteine 44, cysteine 51, histidine 53, histidine 56, histidine 58, cysteine 59, cysteine 73, and cysteine 76. The segment at 34 to 77 adopts an RING-type zinc-finger fold; the sequence is CPDCKVPGDDCPLVWGQCSHCFHMHCILKWLNAQQVQQHCPMCR.

Belongs to the RING-box family. In terms of assembly, the mammalian APC/C is composed at least of 14 distinct subunits ANAPC1, ANAPC2, CDC27/APC3, ANAPC4, ANAPC5, CDC16/APC6, ANAPC7, CDC23/APC8, ANAPC10, ANAPC11, CDC26/APC12, ANAPC13, ANAPC15 and ANAPC16 that assemble into a complex of at least 19 chains with a combined molecular mass of around 1.2 MDa; APC/C interacts with FZR1 and FBXO5. Interacts with the cullin domain of ANAPC2. Interacts with UBE2D2. Post-translationally, auto-ubiquitinated.

It localises to the cytoplasm. Its subcellular location is the nucleus. It participates in protein modification; protein ubiquitination. Functionally, together with the cullin protein ANAPC2, constitutes the catalytic component of the anaphase promoting complex/cyclosome (APC/C), a cell cycle-regulated E3 ubiquitin ligase that controls progression through mitosis and the G1 phase of the cell cycle. The APC/C complex acts by mediating ubiquitination and subsequent degradation of target proteins: it mainly mediates the formation of 'Lys-11'-linked polyubiquitin chains and, to a lower extent, the formation of 'Lys-48'- and 'Lys-63'-linked polyubiquitin chains. The APC/C complex catalyzes assembly of branched 'Lys-11'-/'Lys-48'-linked branched ubiquitin chains on target proteins. May recruit the E2 ubiquitin-conjugating enzymes to the complex. In Bos taurus (Bovine), this protein is Anaphase-promoting complex subunit 11 (ANAPC11).